The chain runs to 95 residues: Protein TusB (95 aa).

This sequence belongs to the DsrH/TusB family. As to quaternary structure, heterohexamer, formed by a dimer of trimers. The hexameric TusBCD complex contains 2 copies each of TusB, TusC and TusD. The TusBCD complex interacts with TusE.

The protein resides in the cytoplasm. Part of a sulfur-relay system required for 2-thiolation of 5-methylaminomethyl-2-thiouridine (mnm(5)s(2)U) at tRNA wobble positions. The protein is Protein TusB of Escherichia coli (strain K12 / MC4100 / BW2952).